Here is a 126-residue protein sequence, read N- to C-terminus: B3 domain-containing protein At5g54067 (126 aa).

Residues 20–118 (SDIVGNVVLP…KFVVLNFQYS (99 aa)) constitute a DNA-binding region (TF-B3).

It is found in the nucleus. The sequence is that of B3 domain-containing protein At5g54067 from Arabidopsis thaliana (Mouse-ear cress).